The following is a 991-amino-acid chain: MMVDNEEINSLSIENILERINKSSNINEAKSLCLFASSLFDNNQYLLIQRYLISIKERDFDISIQLFWRLFNNNSFKEYIVLVVLKFLEKEIEDLEYYDFIKKNYRDQFQKIFIDSDDNSTNNSSSSSNENKKNKRSYLKLNTILNKLTKSLNHLSFYISEIDNLNKFFNPITFLLNNNNNNNNNNNNNNNNNNNKNNSNNNNKNNNNNNDDSNNNNNNNFLKILELIQKSCQYLNENENYEYSILLYLLIKGKFENKIRTFIKSSKKEDQDIKSKIKRFWFNGIQSLNQYKNKYSSKIEIEPPLPMKSYFDEDDYDQKQQQQQQQQQQQQEQKGSKEDEEDIEKQKKSLTSEIELFLLPINRFCLPIIFHIENEEFEQLDIKGNSGSGSDSSSSISKLEIVDQCWKYYICKGDDITDESILEIQKFLQQFADSGKHLKRHQNNSILNFTINLLSNPEKARNDYFDRNSEGNGGDENDENSQESNDSYEFEIHLGIYLLSSLLYISSWRYFKFLVTGSSNIEKQNIQTIGTLKKNQILLFDANFNSNSNSSSGSNGIINNNSNSNQQSYHNNNNNNNNNNNNNNNNNNNNNNNNNNNNNNNNNNNNNNNQGQQPNLSMITHQVLYYSNVDDESSFDDEFPKIVFTKQQTEAIKHLTLCMECFNDLNQEPWINDFKRILSTTWNNSKFYWLYNSLADSHYYYKLDGANTLIPIGDSKKRLFNPNDELWFNRLLLNIGMTNHSEIEDSIICLLEILISISIPPPPSSSSSSFSSSNSSLNNDLFNQQLVPSKHTFKTIKPYLTVFSEEEILFWCIDTLATCYERLGMVGEITVLYQAYWNYYKSRFYQIINEIKGTPNQNPNLIPLSNLVKKDLQIGYFFPRFFDYIINIEMLEEFCFILNKGFKLDILQRNQTVSSNREMIDIIKRHITITTSNNNLTIPILLKQFFNEELDHFLIKKENREKQYSSSNTANNSGVNNSPIHNQNTDVEMNE.

Disordered regions lie at residues 180 to 217, 310 to 345, 462 to 484, 549 to 614, and 961 to 991; these read NNNNNNNNNNNNNNNNKNNSNNNNKNNNNNNDDSNNNN, YFDEDDYDQKQQQQQQQQQQQQEQKGSKEDEEDIEK, NDYFDRNSEGNGGDENDENSQES, NSSS…GQQP, and EKQYSSSNTANNSGVNNSPIHNQNTDVEMNE. Over residues 319–333 the composition is skewed to low complexity; that stretch reads KQQQQQQQQQQQQEQ. The span at 473 to 484 shows a compositional bias: acidic residues; that stretch reads GGDENDENSQES. The segment covering 549-609 has biased composition (low complexity); it reads NSSSGSNGII…NNNNNNNNNN (61 aa). Residues 964–991 show a composition bias toward polar residues; it reads YSSSNTANNSGVNNSPIHNQNTDVEMNE.

The protein resides in the nucleus. Functionally, may be a component of the Integrator complex, a complex involved in the small nuclear RNAs (snRNA) U1 and U2 transcription and in their 3'-box-dependent processing. The chain is Integrator complex subunit 10-like protein from Dictyostelium discoideum (Social amoeba).